A 234-amino-acid polypeptide reads, in one-letter code: Ribosomal RNA small subunit methyltransferase G (234 aa).

S-adenosyl-L-methionine-binding positions include Gly74, Phe79, 125 to 126 (AE), and Arg144.

It belongs to the methyltransferase superfamily. RNA methyltransferase RsmG family.

The protein resides in the cytoplasm. Specifically methylates the N7 position of a guanine in 16S rRNA. The protein is Ribosomal RNA small subunit methyltransferase G of Roseiflexus sp. (strain RS-1).